The primary structure comprises 165 residues: Neurotrophin-3 (165 aa).

The N-terminal stretch at 1 to 3 is a signal peptide; the sequence is IQS. Residues 4-119 constitute a propeptide that is removed on maturation; sequence TSMDQGSLSE…VLNRTSRRKR (116 aa). The N-linked (GlcNAc...) asparagine glycan is linked to Asn112.

It belongs to the NGF-beta family.

The protein localises to the secreted. Seems to promote the survival of visceral and proprioceptive sensory neurons. The chain is Neurotrophin-3 (NTF3) from Anilius scytale (Coral cylinder snake).